We begin with the raw amino-acid sequence, 295 residues long: Protease HtpX (295 aa).

The next 2 helical transmembrane spans lie at 5 to 25 (VILF…SMRL) and 43 to 63 (ALLI…LAIS). H148 contributes to the Zn(2+) binding site. The active site involves E149. H152 contributes to the Zn(2+) binding site. A run of 2 helical transmembrane segments spans residues 159 to 179 (VTLA…ARII) and 198 to 218 (FFIT…LIVL). E225 provides a ligand contact to Zn(2+).

It belongs to the peptidase M48B family. Zn(2+) serves as cofactor.

It is found in the cell inner membrane. The protein is Protease HtpX of Nitrosococcus oceani (strain ATCC 19707 / BCRC 17464 / JCM 30415 / NCIMB 11848 / C-107).